The chain runs to 441 residues: S-adenosylmethionine synthase 1 (441 aa).

Position 9 (E9) interacts with Mg(2+). H15 lines the ATP pocket. E43 lines the K(+) pocket. E56 and Q99 together coordinate L-methionine. Residues 167 to 169 (DGK), 235 to 238 (SGRF), D246, 252 to 253 (RK), A269, K273, and K277 contribute to the ATP site. D246 contacts L-methionine. K277 provides a ligand contact to L-methionine.

This sequence belongs to the AdoMet synthase family. In terms of assembly, homotetramer. Requires Mn(2+) as cofactor. Mg(2+) serves as cofactor. It depends on Co(2+) as a cofactor. K(+) is required as a cofactor.

It localises to the cytoplasm. It catalyses the reaction L-methionine + ATP + H2O = S-adenosyl-L-methionine + phosphate + diphosphate. It functions in the pathway amino-acid biosynthesis; S-adenosyl-L-methionine biosynthesis; S-adenosyl-L-methionine from L-methionine: step 1/1. Its function is as follows. Catalyzes the formation of S-adenosylmethionine from methionine and ATP. The reaction comprises two steps that are both catalyzed by the same enzyme: formation of S-adenosylmethionine (AdoMet) and triphosphate, and subsequent hydrolysis of the triphosphate. This Daucus carota (Wild carrot) protein is S-adenosylmethionine synthase 1 (SAMS1).